The sequence spans 219 residues: Pyridoxal 5'-phosphate synthase subunit PDX2 (219 aa).

An L-glutamine-binding site is contributed by 52–54 (GES). The active-site Nucleophile is the cysteine 87. L-glutamine is bound by residues arginine 121 and 153-154 (IR). Active-site charge relay system residues include histidine 196 and glutamate 198.

Belongs to the glutaminase PdxT/SNO family. In the presence of Pdx1, forms a dodecamer of heterodimers. Only shows activity in the heterodimer.

Its subcellular location is the cytoplasm. The enzyme catalyses aldehydo-D-ribose 5-phosphate + D-glyceraldehyde 3-phosphate + L-glutamine = pyridoxal 5'-phosphate + L-glutamate + phosphate + 3 H2O + H(+). The catalysed reaction is L-glutamine + H2O = L-glutamate + NH4(+). It participates in cofactor biosynthesis; pyridoxal 5'-phosphate biosynthesis. Functionally, catalyzes the hydrolysis of glutamine to glutamate and ammonia as part of the biosynthesis of pyridoxal 5'-phosphate. The resulting ammonia molecule is channeled to the active site of Pdx1. This is Pyridoxal 5'-phosphate synthase subunit PDX2 from Plasmodium falciparum (isolate 3D7).